Consider the following 28-residue polypeptide: Potassium channel toxin alpha-KTx 9.10 (28 aa).

3 cysteine pairs are disulfide-bonded: Cys-3–Cys-19, Cys-6–Cys-24, and Cys-10–Cys-26.

It belongs to the short scorpion toxin superfamily. Potassium channel inhibitor family. Alpha-KTx 09 subfamily. Expressed by the venom gland.

Its subcellular location is the secreted. Blocks Shaker potassium channels. The sequence is that of Potassium channel toxin alpha-KTx 9.10 from Mesobuthus eupeus (Lesser Asian scorpion).